A 267-amino-acid chain; its full sequence is L-aspartate dehydrogenase (267 aa).

2 residues coordinate NAD(+): A124 and N190. The active site involves H218.

Belongs to the L-aspartate dehydrogenase family.

It carries out the reaction L-aspartate + NADP(+) + H2O = oxaloacetate + NH4(+) + NADPH + H(+). The catalysed reaction is L-aspartate + NAD(+) + H2O = oxaloacetate + NH4(+) + NADH + H(+). It participates in cofactor biosynthesis; NAD(+) biosynthesis; iminoaspartate from L-aspartate (dehydrogenase route): step 1/1. Functionally, specifically catalyzes the NAD or NADP-dependent dehydrogenation of L-aspartate to iminoaspartate. The sequence is that of L-aspartate dehydrogenase from Methanococcus maripaludis (strain C6 / ATCC BAA-1332).